Here is a 316-residue protein sequence, read N- to C-terminus: Aspartate carbamoyltransferase catalytic subunit (316 aa).

Positions 56 and 57 each coordinate carbamoyl phosphate. K84 contributes to the L-aspartate binding site. The carbamoyl phosphate site is built by R106, H139, and Q142. Positions 172 and 226 each coordinate L-aspartate. 2 residues coordinate carbamoyl phosphate: G267 and P268.

The protein belongs to the aspartate/ornithine carbamoyltransferase superfamily. ATCase family. Heterododecamer (2C3:3R2) of six catalytic PyrB chains organized as two trimers (C3), and six regulatory PyrI chains organized as three dimers (R2).

The catalysed reaction is carbamoyl phosphate + L-aspartate = N-carbamoyl-L-aspartate + phosphate + H(+). The protein operates within pyrimidine metabolism; UMP biosynthesis via de novo pathway; (S)-dihydroorotate from bicarbonate: step 2/3. Functionally, catalyzes the condensation of carbamoyl phosphate and aspartate to form carbamoyl aspartate and inorganic phosphate, the committed step in the de novo pyrimidine nucleotide biosynthesis pathway. The chain is Aspartate carbamoyltransferase catalytic subunit from Mycobacterium sp. (strain MCS).